A 105-amino-acid polypeptide reads, in one-letter code: MTLDALFATILDRKTADPASSWTAQLLSKGPEKCAEKFGEEAVEAIIEAVKGDRDALTGEAADVLYHLLVMLAACDVDLKDVLAELERRQNTSGIAEKQGRFKAP.

It belongs to the PRA-PH family.

The protein localises to the cytoplasm. The catalysed reaction is 1-(5-phospho-beta-D-ribosyl)-ATP + H2O = 1-(5-phospho-beta-D-ribosyl)-5'-AMP + diphosphate + H(+). Its pathway is amino-acid biosynthesis; L-histidine biosynthesis; L-histidine from 5-phospho-alpha-D-ribose 1-diphosphate: step 2/9. This Roseobacter denitrificans (strain ATCC 33942 / OCh 114) (Erythrobacter sp. (strain OCh 114)) protein is Phosphoribosyl-ATP pyrophosphatase.